A 117-amino-acid polypeptide reads, in one-letter code: Ribosome-binding factor A (117 aa).

This sequence belongs to the RbfA family. Monomer. Binds 30S ribosomal subunits, but not 50S ribosomal subunits or 70S ribosomes.

It localises to the cytoplasm. One of several proteins that assist in the late maturation steps of the functional core of the 30S ribosomal subunit. Associates with free 30S ribosomal subunits (but not with 30S subunits that are part of 70S ribosomes or polysomes). Required for efficient processing of 16S rRNA. May interact with the 5'-terminal helix region of 16S rRNA. The chain is Ribosome-binding factor A from Leptospira borgpetersenii serovar Hardjo-bovis (strain JB197).